A 282-amino-acid chain; its full sequence is Pantothenate synthetase (282 aa).

Residue 30 to 37 (MGYLHEGH) participates in ATP binding. The active-site Proton donor is the His37. A (R)-pantoate-binding site is contributed by Gln61. Gln61 provides a ligand contact to beta-alanine. 148–151 (GQKD) is an ATP binding site. Gln154 contacts (R)-pantoate. ATP-binding positions include Val177 and 185-188 (MSSR).

This sequence belongs to the pantothenate synthetase family. As to quaternary structure, homodimer.

It localises to the cytoplasm. It catalyses the reaction (R)-pantoate + beta-alanine + ATP = (R)-pantothenate + AMP + diphosphate + H(+). It participates in cofactor biosynthesis; (R)-pantothenate biosynthesis; (R)-pantothenate from (R)-pantoate and beta-alanine: step 1/1. In terms of biological role, catalyzes the condensation of pantoate with beta-alanine in an ATP-dependent reaction via a pantoyl-adenylate intermediate. The chain is Pantothenate synthetase from Syntrophomonas wolfei subsp. wolfei (strain DSM 2245B / Goettingen).